A 325-amino-acid polypeptide reads, in one-letter code: Germination protease (325 aa).

Positions 1-7 (MYNVRTD) are excised as a propeptide.

Belongs to the peptidase A25 family. In terms of assembly, homotetramer. In terms of processing, autoproteolytically processed. The inactive tetrameric zymogen termed p46 autoprocesses to a smaller form termed p41, which is active only during spore germination.

The enzyme catalyses Endopeptidase action with P4 Glu or Asp, P1 preferably Glu &gt; Asp, P1' hydrophobic and P2' Ala.. In terms of biological role, initiates the rapid degradation of small, acid-soluble proteins during spore germination. The sequence is that of Germination protease from Clostridium perfringens (strain ATCC 13124 / DSM 756 / JCM 1290 / NCIMB 6125 / NCTC 8237 / Type A).